Reading from the N-terminus, the 101-residue chain is UPF0060 membrane protein ACIAD1364 (101 aa).

3 consecutive transmembrane segments (helical) span residues tryptophan 24–proline 44, isoleucine 50–aspartate 70, and isoleucine 79–leucine 99.

The protein belongs to the UPF0060 family.

Its subcellular location is the cell inner membrane. The sequence is that of UPF0060 membrane protein ACIAD1364 from Acinetobacter baylyi (strain ATCC 33305 / BD413 / ADP1).